Here is a 409-residue protein sequence, read N- to C-terminus: Aquaporin-10 (409 aa).

Disordered stretches follow at residues 1–24 and 47–74; these read MADAPTYIRQSTTGTATTAPTTMP and ADVNDDNHDNYDETTGLRSGEKKTRPLV. Residues 12–22 are compositionally biased toward low complexity; that stretch reads TTGTATTAPTT. 2 helical membrane-spanning segments follow: residues 110–130 and 138–158; these read FLGSFILIVFGNGVVAQVVLS and LSINIGYGLAVAFGVYIAGGI. An NPA 1 motif is present at residues 164-166; the sequence is NPA. Residues 184–204 form a helical membrane-spanning segment; that stretch reads VYMFAQYAGCICASAIVHAIY. An N-linked (GlcNAc...) asparagine glycan is attached at Asn215. 2 consecutive transmembrane segments (helical) span residues 241 to 261 and 270 to 290; these read TGLADQIFATSFLMIGILALT and GGVVPILVGCLVMAIGLAYGF. The NPA 2 signature appears at 297 to 299; the sequence is NPA. The helical transmembrane segment at 339–359 threads the bilayer; the sequence is IPVVGPHLGALLGAAIYFFFI.

It belongs to the MIP/aquaporin (TC 1.A.8) family.

It is found in the cell membrane. Aquaglyceroporin that may modulate the water content and osmolytes during anhydrobiosis. The protein is Aquaporin-10 of Milnesium tardigradum (Water bear).